The following is a 49-amino-acid chain: Large ribosomal subunit protein bL33A (49 aa).

Belongs to the bacterial ribosomal protein bL33 family.

In Bacillus pumilus (strain SAFR-032), this protein is Large ribosomal subunit protein bL33A.